Reading from the N-terminus, the 368-residue chain is UPF0284 protein Cyan7425_0342 (368 aa).

Belongs to the UPF0284 family.

The sequence is that of UPF0284 protein Cyan7425_0342 from Cyanothece sp. (strain PCC 7425 / ATCC 29141).